Consider the following 675-residue polypeptide: UvrABC system protein B (675 aa).

The 158-residue stretch at Gln35–Arg192 folds into the Helicase ATP-binding domain. ATP is bound at residue Gly48 to Thr55. Positions Tyr101–Ile124 match the Beta-hairpin motif. The 167-residue stretch at Gln439–Ile605 folds into the Helicase C-terminal domain. In terms of domain architecture, UVR spans Ala633–Arg668.

This sequence belongs to the UvrB family. As to quaternary structure, forms a heterotetramer with UvrA during the search for lesions. Interacts with UvrC in an incision complex.

It localises to the cytoplasm. Functionally, the UvrABC repair system catalyzes the recognition and processing of DNA lesions. A damage recognition complex composed of 2 UvrA and 2 UvrB subunits scans DNA for abnormalities. Upon binding of the UvrA(2)B(2) complex to a putative damaged site, the DNA wraps around one UvrB monomer. DNA wrap is dependent on ATP binding by UvrB and probably causes local melting of the DNA helix, facilitating insertion of UvrB beta-hairpin between the DNA strands. Then UvrB probes one DNA strand for the presence of a lesion. If a lesion is found the UvrA subunits dissociate and the UvrB-DNA preincision complex is formed. This complex is subsequently bound by UvrC and the second UvrB is released. If no lesion is found, the DNA wraps around the other UvrB subunit that will check the other stand for damage. This Bordetella petrii (strain ATCC BAA-461 / DSM 12804 / CCUG 43448) protein is UvrABC system protein B.